The sequence spans 124 residues: UPF0382 membrane protein HI_1073 (124 aa).

3 helical membrane passes run 6–26 (LTLV…AAHG), 70–90 (SMSS…ALAF), and 95–115 (VIVW…ISLA).

Belongs to the UPF0382 family.

The protein localises to the cell membrane. The chain is UPF0382 membrane protein HI_1073 from Haemophilus influenzae (strain ATCC 51907 / DSM 11121 / KW20 / Rd).